The primary structure comprises 473 residues: FAD-dependent oxidoreductase dpchF (473 aa).

The N-terminal stretch at 1–21 (MKLSFIASPVWALALAQFAAA) is a signal peptide. N-linked (GlcNAc...) asparagine glycans are attached at residues asparagine 98, asparagine 128, asparagine 181, asparagine 262, and asparagine 330.

It belongs to the beta-cyclopiazonate dehydrogenase family. FAD is required as a cofactor.

It participates in secondary metabolite biosynthesis; terpenoid biosynthesis. Its function is as follows. FAD-dependent oxidoreductase; part of the gene cluster that mediates the biosynthesis of the diterpenoid pyrones higginsianins A and B. The first step of the pathway is the synthesis of the alpha-pyrone moiety by the polyketide synthase dpchA via condensation of one acetyl-CoA starter unit with 3 malonyl-CoA units and 2 methylations. The alpha-pyrone is then combined with geranylgeranyl pyrophosphate (GGPP) formed by the GGPP synthase dpchD through the action of the prenyltransferase dpchC to yield a linear alpha-pyrone diterpenoid. Subsequent steps in the diterpenoid pyrone biosynthetic pathway involve the decalin core formation, which is initiated by the epoxidation of the C10-C11 olefin by the FAD-dependent oxidoreductase dpchE, and is followed by a cyclization cascade catalyzed by the terpene cyclase dpchB. The short chain dehydrogenase/reductase dpchG then oxidizes the 8S hydroxy group to a ketone and the short chain dehydrogenase/reductase dpchH reduces the ketone to the 8R hydroxy group to yield higginsianin B. Finally, the FAD-dependent oxidoreductase dpchF converts higginsianin B into higginsianin A. This is FAD-dependent oxidoreductase dpchF from Colletotrichum higginsianum (strain IMI 349063) (Crucifer anthracnose fungus).